The following is a 679-amino-acid chain: uncharacterized protein (679 aa).

The next 12 helical transmembrane spans lie at 23 to 41, 46 to 65, 72 to 90, 94 to 113, 120 to 142, 157 to 179, 362 to 381, 385 to 404, 411 to 433, 438 to 455, 462 to 481, and 496 to 515; these read YALR…AYYL, PYWA…GGVI, IAGS…GHTL, WLFL…ACAH, YAFQ…IVEI, IVGI…GTAL, WSGV…SIGA, SGPG…SIVA, SLLM…GLMV, LWQF…MQLL, LAGL…AVTN, and AKIV…RPGS.

This sequence belongs to the aromatic acid exporter ArAE (TC 2.A.85) family.

The protein resides in the cell membrane. This is an uncharacterized protein from Salmonella typhimurium (strain LT2 / SGSC1412 / ATCC 700720).